The sequence spans 344 residues: Methionine import ATP-binding protein MetN 1 (344 aa).

The ABC transporter domain maps to 2–241 (IEIRNISQRF…PHHEVTRALI (240 aa)). Residue 38 to 45 (GRSGAGKS) coordinates ATP.

It belongs to the ABC transporter superfamily. Methionine importer (TC 3.A.1.24) family. The complex is composed of two ATP-binding proteins (MetN), two transmembrane proteins (MetI) and a solute-binding protein (MetQ).

The protein resides in the cell inner membrane. The enzyme catalyses L-methionine(out) + ATP + H2O = L-methionine(in) + ADP + phosphate + H(+). It carries out the reaction D-methionine(out) + ATP + H2O = D-methionine(in) + ADP + phosphate + H(+). Its function is as follows. Part of the ABC transporter complex MetNIQ involved in methionine import. Responsible for energy coupling to the transport system. The chain is Methionine import ATP-binding protein MetN 1 from Paraburkholderia xenovorans (strain LB400).